The chain runs to 161 residues: Regulator of ribonuclease activity A (161 aa).

Belongs to the RraA family. In terms of assembly, homotrimer. Binds to both RNA-binding sites in the C-terminal region of Rne and to RhlB.

Its subcellular location is the cytoplasm. Functionally, globally modulates RNA abundance by binding to RNase E (Rne) and regulating its endonucleolytic activity. Can modulate Rne action in a substrate-dependent manner by altering the composition of the degradosome. Modulates RNA-binding and helicase activities of the degradosome. In Serratia proteamaculans (strain 568), this protein is Regulator of ribonuclease activity A.